We begin with the raw amino-acid sequence, 1073 residues long: DNA-directed RNA polymerase subunit beta (1073 aa).

The protein belongs to the RNA polymerase beta chain family. In plastids the minimal PEP RNA polymerase catalytic core is composed of four subunits: alpha, beta, beta', and beta''. When a (nuclear-encoded) sigma factor is associated with the core the holoenzyme is formed, which can initiate transcription.

It is found in the plastid. The protein localises to the chloroplast. It catalyses the reaction RNA(n) + a ribonucleoside 5'-triphosphate = RNA(n+1) + diphosphate. Its function is as follows. DNA-dependent RNA polymerase catalyzes the transcription of DNA into RNA using the four ribonucleoside triphosphates as substrates. The chain is DNA-directed RNA polymerase subunit beta from Aethionema cordifolium (Lebanon stonecress).